Here is a 391-residue protein sequence, read N- to C-terminus: Elongation factor Tu (391 aa).

The region spanning 10 to 201 (KPHVNIGTIG…AVDEYIPTPA (192 aa)) is the tr-type G domain. The segment at 19–26 (GHVDHGKT) is G1. Residue 19–26 (GHVDHGKT) coordinates GTP. Position 26 (threonine 26) interacts with Mg(2+). Residues 55–59 (GITIS) are G2. Positions 76-79 (DCPG) are G3. Residues 76–80 (DCPGH) and 131–134 (NKVD) each bind GTP. The segment at 131 to 134 (NKVD) is G4. The tract at residues 169-171 (SAL) is G5.

The protein belongs to the TRAFAC class translation factor GTPase superfamily. Classic translation factor GTPase family. EF-Tu/EF-1A subfamily. As to quaternary structure, monomer.

It is found in the cytoplasm. The enzyme catalyses GTP + H2O = GDP + phosphate + H(+). Functionally, GTP hydrolase that promotes the GTP-dependent binding of aminoacyl-tRNA to the A-site of ribosomes during protein biosynthesis. This chain is Elongation factor Tu, found in Cereibacter sphaeroides (strain ATCC 17029 / ATH 2.4.9) (Rhodobacter sphaeroides).